The sequence spans 140 residues: Large ribosomal subunit protein uL15 (140 aa).

The tract at residues 1–32 (MDTKKFRGSRTCGGGTHKNRRGAGNRGGRGKA) is disordered.

The protein belongs to the universal ribosomal protein uL15 family. Part of the 50S ribosomal subunit.

Functionally, binds to the 23S rRNA. This Methanosarcina acetivorans (strain ATCC 35395 / DSM 2834 / JCM 12185 / C2A) protein is Large ribosomal subunit protein uL15.